We begin with the raw amino-acid sequence, 705 residues long: Protein artemis (705 aa).

Threonine 380 bears the Phosphothreonine mark. Position 385 is a phosphoserine (serine 385). Residues 451–462 show a composition bias toward acidic residues; sequence EESNSDSGEELE. Disordered stretches follow at residues 451 to 484, 535 to 569, and 638 to 675; these read EESN…NADP, PKLC…GWDS, and TLSG…AELP. Positions 546–559 are enriched in low complexity; the sequence is THISSQNSSQSTHI. Over residues 560–569 the composition is skewed to polar residues; that stretch reads TDQGSQGWDS. Residues 652 to 662 are compositionally biased toward low complexity; it reads SSTRADSQSSS. A Phosphoserine; by ATM modification is found at serine 658.

This sequence belongs to the DNA repair metallo-beta-lactamase (DRMBL) family. As to quaternary structure, interacts with LIG4; the interaction is direct. Interacts with ATM. Interacts with BRCA1. Interacts with PRKDC. Interacts with TP53BP1. Also exhibits ATM- and phosphorylation-dependent interaction with the MRN complex, composed of MRE11, RAD50, and NBN. Post-translationally, phosphorylation on undefined residues by PRKDC may stimulate endonucleolytic activity on 5' and 3' hairpins and overhangs. PRKDC must remain present, even after phosphorylation, for efficient hairpin opening. Also phosphorylated by ATM in response to ionizing radiation (IR) and by ATR in response to ultraviolet (UV) radiation.

Its subcellular location is the nucleus. Functionally, required for V(D)J recombination, the process by which exons encoding the antigen-binding domains of immunoglobulins and T-cell receptor proteins are assembled from individual V, (D), and J gene segments. V(D)J recombination is initiated by the lymphoid specific RAG endonuclease complex, which generates site specific DNA double strand breaks (DSBs). These DSBs present two types of DNA end structures: hairpin sealed coding ends and phosphorylated blunt signal ends. These ends are independently repaired by the non homologous end joining (NHEJ) pathway to form coding and signal joints respectively. This protein likely exhibits single-strand specific 5'-3' exonuclease activity in isolation, and may acquire endonucleolytic activity on 5' and 3' hairpins and overhangs when in a complex with PRKDC. The latter activity may be required specifically for the resolution of closed hairpins prior to the formation of the coding joint. May also be required for the repair of complex DSBs induced by ionizing radiation, which require substantial end-processing prior to religation by NHEJ. This Mus musculus (Mouse) protein is Protein artemis (Dclre1c).